The primary structure comprises 442 residues: Mitochondrial distribution and morphology protein 12 (442 aa).

One can recognise an SMP-LTD domain in the interval 1-442; that stretch reads MSIDINWEAA…VYPSFWTFLV (442 aa). Disordered regions lie at residues 67–125, 202–277, and 364–387; these read NDFY…RVGY, LSLA…RRMR, and EGYH…RRSN. Acidic residues predominate over residues 69–80; sequence FYEEDEDGEDLS. Over residues 90-100 the composition is skewed to polar residues; sequence PSSQGLSQSTP. Residues 101-112 show a composition bias toward low complexity; that stretch reads NGDAGSSNSSSN. The span at 213–222 shows a compositional bias: basic and acidic residues; it reads RQRERARSSD. Over residues 227 to 245 the composition is skewed to low complexity; the sequence is SPQSRSRPSTSSTRQRTST.

Belongs to the MDM12 family. In terms of assembly, component of the ER-mitochondria encounter structure (ERMES) or MDM complex, composed of MMM1, MDM10, MDM12 and MDM34. An MMM1 homodimer associates with one molecule of MDM12 on each side in a pairwise head-to-tail manner, and the SMP-LTD domains of MMM1 and MDM12 generate a continuous hydrophobic tunnel for phospholipid trafficking.

Its subcellular location is the mitochondrion outer membrane. It is found in the endoplasmic reticulum membrane. Its function is as follows. Component of the ERMES/MDM complex, which serves as a molecular tether to connect the endoplasmic reticulum (ER) and mitochondria. Components of this complex are involved in the control of mitochondrial shape and protein biogenesis, and function in nonvesicular lipid trafficking between the ER and mitochondria. MDM12 is required for the interaction of the ER-resident membrane protein MMM1 and the outer mitochondrial membrane-resident beta-barrel protein MDM10. The MDM12-MMM1 subcomplex functions in the major beta-barrel assembly pathway that is responsible for biogenesis of all mitochondrial outer membrane beta-barrel proteins, and acts in a late step after the SAM complex. The MDM10-MDM12-MMM1 subcomplex further acts in the TOM40-specific pathway after the action of the MDM12-MMM1 complex. Essential for establishing and maintaining the structure of mitochondria and maintenance of mtDNA nucleoids. This chain is Mitochondrial distribution and morphology protein 12, found in Arthroderma otae (strain ATCC MYA-4605 / CBS 113480) (Microsporum canis).